The sequence spans 227 residues: Probable methylthioribulose-1-phosphate dehydratase (227 aa).

A substrate-binding site is contributed by Cys-87. Zn(2+)-binding residues include His-105 and His-107. Glu-129 (proton donor/acceptor) is an active-site residue. His-185 is a Zn(2+) binding site.

It belongs to the aldolase class II family. MtnB subfamily. The cofactor is Zn(2+).

Its subcellular location is the cytoplasm. It catalyses the reaction 5-(methylsulfanyl)-D-ribulose 1-phosphate = 5-methylsulfanyl-2,3-dioxopentyl phosphate + H2O. It participates in amino-acid biosynthesis; L-methionine biosynthesis via salvage pathway; L-methionine from S-methyl-5-thio-alpha-D-ribose 1-phosphate: step 2/6. Catalyzes the dehydration of methylthioribulose-1-phosphate (MTRu-1-P) into 2,3-diketo-5-methylthiopentyl-1-phosphate (DK-MTP-1-P). The protein is Probable methylthioribulose-1-phosphate dehydratase of Drosophila erecta (Fruit fly).